A 184-amino-acid chain; its full sequence is Protein GrpE (184 aa).

Over residues 1–12 (MADEQLNEKDLN) the composition is skewed to basic and acidic residues. The disordered stretch occupies residues 1–22 (MADEQLNEKDLNAEEAGAVDNG).

The protein belongs to the GrpE family. In terms of assembly, homodimer.

It localises to the cytoplasm. Participates actively in the response to hyperosmotic and heat shock by preventing the aggregation of stress-denatured proteins, in association with DnaK and GrpE. It is the nucleotide exchange factor for DnaK and may function as a thermosensor. Unfolded proteins bind initially to DnaJ; upon interaction with the DnaJ-bound protein, DnaK hydrolyzes its bound ATP, resulting in the formation of a stable complex. GrpE releases ADP from DnaK; ATP binding to DnaK triggers the release of the substrate protein, thus completing the reaction cycle. Several rounds of ATP-dependent interactions between DnaJ, DnaK and GrpE are required for fully efficient folding. The protein is Protein GrpE of Pseudomonas putida (strain W619).